A 517-amino-acid chain; its full sequence is Crotonobetaine/carnitine--CoA ligase (517 aa).

The protein belongs to the ATP-dependent AMP-binding enzyme family.

The enzyme catalyses 4-(trimethylamino)butanoate + ATP + CoA = 4-(trimethylamino)butanoyl-CoA + AMP + diphosphate. It carries out the reaction crotonobetaine + ATP + CoA = crotonobetainyl-CoA + AMP + diphosphate. The catalysed reaction is (R)-carnitine + ATP + CoA = (R)-carnitinyl-CoA + AMP + diphosphate. The protein operates within amine and polyamine metabolism; carnitine metabolism. Functionally, catalyzes the transfer of CoA to carnitine, generating the initial carnitinyl-CoA needed for the CaiB reaction cycle. Also has activity toward crotonobetaine and gamma-butyrobetaine. In Shigella dysenteriae serotype 1 (strain Sd197), this protein is Crotonobetaine/carnitine--CoA ligase.